A 3329-amino-acid chain; its full sequence is Breast cancer type 2 susceptibility protein homolog (3329 aa).

The tract at residues 1 to 40 (MPVEYKRRPTFWEIFKARCSTADLGPISLNWFEELSSEAP) is interaction with PALB2. Disordered regions lie at residues 37 to 69 (SEAPPYNSEPPEESEYKPHGYEPQLFKTPQRNP) and 207 to 241 (EARSSVTPADSPATLKSCFSNHNESPQKNDRSVPS). Residues Ser435 and Ser481 each carry the phosphoserine modification. The segment at 628–650 (PDSSDKKRCLPNDPEEPSLTNSF) is disordered. The interaction with NPM1 stretch occupies residues 628-979 (PDSSDKKRCL…DKWSEFLDPV (352 aa)). Ser735 carries the phosphoserine modification. Basic and acidic residues predominate over residues 934 to 953 (EKSRNNIEQHQKGTEDKDFK). Residues 934 to 965 (EKSRNNIEQHQKGTEDKDFKSNSSLNMKSDGN) form a disordered region. Residues 954-965 (SNSSLNMKSDGN) are compositionally biased toward polar residues. BRCA2 repeat units follow at residues 981–1015 (NHNFGGSFRTASNKEIKLSEHNVKKSKMFFKDIEE) and 1192–1226 (NEMEFGGFCSALGTKLSVSNEALRKAMKLFSDIEN). An interaction with RAD51 region spans residues 982–2035 (HNFGGSFRTA…LHKVKGMLEE (1054 aa)). A disordered region spans residues 1296-1340 (NTKHEDSYTSSQRNNLENSDGSMSSTSGPVYIHKGDSDLPADQGS). The span at 1303 to 1323 (YTSSQRNNLENSDGSMSSTSG) shows a compositional bias: polar residues. BRCA2 repeat units lie at residues 1394–1428 (IKEFNISFQTASGKNTRVSKESLNKSVNIFNRETD), 1491–1525 (KEPTLLSFHTASGKKVKIMQESLDKVKNLFDETQY), 1623–1657 (TEDSALAYYTEDSRKTCVRESSLSKGRKWLREQGD), 1924–1958 (PSRTYGIFSTASGKAIQVSDASLEKARQVFSEMDG), and 2004–2038 (NSSVFSGFSTAGGKLVTVSESALHKVKGMLEEFDL). Ser2048 is subject to Phosphoserine. Residues 2073–2099 (NSKLQKTYNDKSSLPSNYKESGSSGNT) are disordered. Residues 2074–2099 (SKLQKTYNDKSSLPSNYKESGSSGNT) show a composition bias toward polar residues. The segment at 2219–2285 (KRGGVTVDAV…EPVTCGPFCS (67 aa)) is interaction with HSF2BP. Residues 2298 to 2466 (TSPAQELLSK…SPKQLYIYGV (169 aa)) are interaction with FANCD2. The disordered stretch occupies residues 2361-2393 (FHGDEHFNSKNVNLEGKNQKSTDGDREDGNDSH). Basic and acidic residues predominate over residues 2377 to 2393 (KNQKSTDGDREDGNDSH). Residues 2402–2753 (MSSLQSARDL…QRVYPLQWVE (352 aa)) are interaction with SEM1. A Nuclear export signal; masked by interaction with SEM1 motif is present at residues 2603 to 2619 (AAKTLVLCISDIISPST). Ser3214 bears the Phosphoserine; by CDK1 and CDK2 mark. Disordered stretches follow at residues 3221–3257 (FQPPRSCGTKYATPIKKEPSSPRRRTPFQKTSGVSLP) and 3273–3329 (QALT…AVES). Ser3241 is modified (phosphoserine). Basic and acidic residues predominate over residues 3309–3329 (SRKESLRDCRGDSSEKLAVES).

In terms of assembly, monomer and dimer. Interacts with RAD51; regulates RAD51 recruitment and function at sites of DNA repair. Interacts with SEM1, WDR16, USP11, DMC1, ROCK2 and NPM1. Interacts with both nonubiquitinated and monoubiquitinated FANCD2; this complex also includes XRCC3 and phosphorylated FANCG. Part of a BRCA complex containing BRCA1, BRCA2 and PALB2. Component of the homologous recombination repair (HR) complex composed of ERCC5/XPG, BRCA2, PALB2, DSS1 and RAD51. Within the complex, interacts with ERCC5/XPG and PALB2. Interacts directly with PALB2 which may serve as a scaffold for a HR complex containing PALB2, BRCA2, RAD51C, RAD51 and XRCC3. Interacts with BRCA1 only in the presence of PALB2 which serves as the bridging protein. Interacts with POLH; the interaction is direct. Interacts with the TREX-2 complex subunits PCID2 and SEM1. Interacts with HSF2BP and BRME1; the interaction with HSF2BP is direct and allows the formation of a ternary complex. The complex BRME1:HSF2BP:BRCA2 interacts with SPATA22, MEIOB and RAD51. Phosphorylated by ATM upon irradiation-induced DNA damage. Phosphorylation by CHEK1 and CHEK2 regulates interaction with RAD51. Phosphorylation at Ser-3291 by CDK1 and CDK2 is low in S phase when recombination is active, but increases as cells progress towards mitosis; this phosphorylation prevents homologous recombination-dependent repair during S phase and G2 by inhibiting RAD51 binding. In terms of processing, ubiquitinated in the absence of DNA damage; this does not lead to proteasomal degradation. In contrast, ubiquitination in response to DNA damage leads to proteasomal degradation. In terms of tissue distribution, widely expressed. Highest expression in cerebellum, testis, ileum, appendix, epididymis, ovary and mammary gland. No expression in lung.

Its subcellular location is the nucleus. It is found in the cytoplasm. It localises to the cytoskeleton. The protein localises to the microtubule organizing center. The protein resides in the centrosome. Involved in double-strand break repair and/or homologous recombination. Binds RAD51 and potentiates recombinational DNA repair by promoting assembly of RAD51 onto single-stranded DNA (ssDNA). Acts by targeting RAD51 to ssDNA over double-stranded DNA, enabling RAD51 to displace replication protein-A (RPA) from ssDNA and stabilizing RAD51-ssDNA filaments by blocking ATP hydrolysis. Part of a PALB2-scaffolded HR complex containing RAD51C and which is thought to play a role in DNA repair by HR. May participate in S phase checkpoint activation. Binds selectively to ssDNA, and to ssDNA in tailed duplexes and replication fork structures. May play a role in the extension step after strand invasion at replication-dependent DNA double-strand breaks; together with PALB2 is involved in both POLH localization at collapsed replication forks and DNA polymerization activity. In concert with NPM1, regulates centrosome duplication. Interacts with the TREX-2 complex (transcription and export complex 2) subunits PCID2 and SEM1, and is required to prevent R-loop-associated DNA damage and thus transcription-associated genomic instability, independently of its known role in homologous recombination. The polypeptide is Breast cancer type 2 susceptibility protein homolog (Mus musculus (Mouse)).